Reading from the N-terminus, the 256-residue chain is Thiazole synthase (256 aa).

Catalysis depends on Lys-95, which acts as the Schiff-base intermediate with DXP. Residues Gly-156, 182-183 (AG), and 204-205 (NT) each bind 1-deoxy-D-xylulose 5-phosphate.

It belongs to the ThiG family. In terms of assembly, homotetramer. Forms heterodimers with either ThiH or ThiS.

Its subcellular location is the cytoplasm. It carries out the reaction [ThiS sulfur-carrier protein]-C-terminal-Gly-aminoethanethioate + 2-iminoacetate + 1-deoxy-D-xylulose 5-phosphate = [ThiS sulfur-carrier protein]-C-terminal Gly-Gly + 2-[(2R,5Z)-2-carboxy-4-methylthiazol-5(2H)-ylidene]ethyl phosphate + 2 H2O + H(+). Its pathway is cofactor biosynthesis; thiamine diphosphate biosynthesis. Its function is as follows. Catalyzes the rearrangement of 1-deoxy-D-xylulose 5-phosphate (DXP) to produce the thiazole phosphate moiety of thiamine. Sulfur is provided by the thiocarboxylate moiety of the carrier protein ThiS. In vitro, sulfur can be provided by H(2)S. The protein is Thiazole synthase of Escherichia coli O81 (strain ED1a).